A 628-amino-acid polypeptide reads, in one-letter code: tRNA (carboxymethyluridine(34)-5-O)-methyltransferase alkbh8 (628 aa).

In terms of domain architecture, RRM spans 43-123 (QSLVVANGGL…ITLYLSFVEK (81 aa)). Positions 218-335 (DPDQLTINQY…RTSFTFRKVR (118 aa)) constitute a Fe2OG dioxygenase domain. 225-227 (NQY) is a binding site for 2-oxoglutarate. Residues His-236 and Asp-238 each contribute to the Fe cation site. His-240 lines the Zn(2+) pocket. His-290 is a Fe cation binding site. Residues Arg-326 and Arg-332 each contribute to the 2-oxoglutarate site. Zn(2+)-binding residues include Cys-339, Cys-341, and Cys-347. The tract at residues 410–628 (ADVGCGNGKY…GNWCVILEKL (219 aa)) is methyltransferase domain. Positions 563-582 (PTNKSKVTPENKEQNEKEHG) are disordered. Residues 569-582 (VTPENKEQNEKEHG) are compositionally biased toward basic and acidic residues.

Belongs to the alkB family. Requires Fe(2+) as cofactor.

The protein localises to the cytoplasm. It is found in the nucleus. It catalyses the reaction 5-(carboxymethyl)uridine(34) in tRNA + S-adenosyl-L-methionine = 5-(2-methoxy-2-oxoethyl)uridine(34) in tRNA + S-adenosyl-L-homocysteine. In terms of biological role, catalyzes the methylation of 5-carboxymethyl uridine to 5-methylcarboxymethyl uridine at the wobble position of the anticodon loop in tRNA via its methyltransferase domain. Catalyzes the last step in the formation of 5-methylcarboxymethyl uridine at the wobble position of the anticodon loop in target tRNA. Has a preference for tRNA(Arg) and tRNA(Glu), and does not bind tRNA(Lys). Binds tRNA and catalyzes the iron and alpha-ketoglutarate dependent hydroxylation of 5-methylcarboxymethyl uridine at the wobble position of the anticodon loop in tRNA via its dioxygenase domain, giving rise to 5-(S)-methoxycarbonylhydroxymethyluridine; has a preference for tRNA(Gly). Required for normal survival after DNA damage. May inhibit apoptosis and promote cell survival and angiogenesis. The sequence is that of tRNA (carboxymethyluridine(34)-5-O)-methyltransferase alkbh8 (alkbh8) from Xenopus tropicalis (Western clawed frog).